A 190-amino-acid chain; its full sequence is Xanthine phosphoribosyltransferase (190 aa).

2 residues coordinate xanthine: L20 and N27. 128–132 (ANGKA) lines the 5-phospho-alpha-D-ribose 1-diphosphate pocket. K156 contacts xanthine.

It belongs to the purine/pyrimidine phosphoribosyltransferase family. Xpt subfamily. Homodimer.

Its subcellular location is the cytoplasm. It carries out the reaction XMP + diphosphate = xanthine + 5-phospho-alpha-D-ribose 1-diphosphate. It participates in purine metabolism; XMP biosynthesis via salvage pathway; XMP from xanthine: step 1/1. Converts the preformed base xanthine, a product of nucleic acid breakdown, to xanthosine 5'-monophosphate (XMP), so it can be reused for RNA or DNA synthesis. This is Xanthine phosphoribosyltransferase from Pseudomonas entomophila (strain L48).